A 171-amino-acid polypeptide reads, in one-letter code: UPF0398 protein M28_Spy1394 (171 aa).

The protein belongs to the UPF0398 family.

The polypeptide is UPF0398 protein M28_Spy1394 (Streptococcus pyogenes serotype M28 (strain MGAS6180)).